Reading from the N-terminus, the 104-residue chain is Large ribosomal subunit protein uL24 (104 aa).

The protein belongs to the universal ribosomal protein uL24 family. Part of the 50S ribosomal subunit.

Functionally, one of two assembly initiator proteins, it binds directly to the 5'-end of the 23S rRNA, where it nucleates assembly of the 50S subunit. In terms of biological role, one of the proteins that surrounds the polypeptide exit tunnel on the outside of the subunit. The protein is Large ribosomal subunit protein uL24 of Sodalis glossinidius (strain morsitans).